We begin with the raw amino-acid sequence, 328 residues long: Probable magnesium transporter NIPA6 (328 aa).

Residues methionine 1–aspartate 4 are Extracellular-facing. The chain crosses the membrane as a helical span at residues asparagine 5 to leucine 25. Residues lysine 26–proline 51 are Cytoplasmic-facing. A helical membrane pass occupies residues leucine 52–isoleucine 72. The Extracellular portion of the chain corresponds to tyrosine 73–alanine 76. A helical transmembrane segment spans residues valine 77–leucine 97. The Cytoplasmic portion of the chain corresponds to leucine 98–lysine 104. A helical membrane pass occupies residues methionine 105–proline 125. Over lysine 126–glutamine 142 the chain is Extracellular. The chain crosses the membrane as a helical span at residues proline 143–phenylalanine 163. The Cytoplasmic portion of the chain corresponds to glutamate 164–tyrosine 175. The helical transmembrane segment at isoleucine 176–alanine 196 threads the bilayer. Over isoleucine 197 to tyrosine 209 the chain is Extracellular. A helical membrane pass occupies residues proline 210–leucine 230. Residues asparagine 231 to alanine 240 are Cytoplasmic-facing. The chain crosses the membrane as a helical span at residues isoleucine 241–methionine 261. At phenylalanine 262–aspartate 269 the chain is on the extracellular side. The helical transmembrane segment at alanine 270–leucine 290 threads the bilayer. Residues histidine 291–tyrosine 328 lie on the Cytoplasmic side of the membrane.

It belongs to the NIPA (TC 2.A.7) family. Homodimer.

The protein resides in the cell membrane. Its subcellular location is the early endosome. Its function is as follows. Acts as a Mg(2+) transporter. Can also transport other divalent cations such as Fe(2+), Sr(2+), Ba(2+), Mn(2+) and Co(2+) but to a much less extent than Mg(2+). This chain is Probable magnesium transporter NIPA6, found in Arabidopsis thaliana (Mouse-ear cress).